The sequence spans 616 residues: Elongation factor 4 (616 aa).

The tr-type G domain maps to 17–203 (ERIRNFCIIA…RVCELVPAPV (187 aa)). GTP-binding positions include 29–34 (DHGKST) and 150–153 (NKID).

Belongs to the TRAFAC class translation factor GTPase superfamily. Classic translation factor GTPase family. LepA subfamily.

The protein resides in the cell membrane. The enzyme catalyses GTP + H2O = GDP + phosphate + H(+). Required for accurate and efficient protein synthesis under certain stress conditions. May act as a fidelity factor of the translation reaction, by catalyzing a one-codon backward translocation of tRNAs on improperly translocated ribosomes. Back-translocation proceeds from a post-translocation (POST) complex to a pre-translocation (PRE) complex, thus giving elongation factor G a second chance to translocate the tRNAs correctly. Binds to ribosomes in a GTP-dependent manner. This is Elongation factor 4 from Corynebacterium jeikeium (strain K411).